A 343-amino-acid chain; its full sequence is Cell invasion protein SipD (343 aa).

The tract at residues 1–26 is disordered; that stretch reads MLNIQNYSASPHPGIVAERPQTPSAS. The stretch at 295–322 forms a coiled coil; it reads KAQEENMKTTLQTLTQKYSNANSLYDNL.

Belongs to the invasin protein D family.

The protein resides in the secreted. Required for translocation of effector proteins via the type III secretion system SPI-1, which is essential for an efficient bacterial internalization. Probably acts by modulating the secretion of SipA, SipB, and SipC. In Salmonella typhimurium (strain LT2 / SGSC1412 / ATCC 700720), this protein is Cell invasion protein SipD (sipD).